A 487-amino-acid chain; its full sequence is Cyclic AMP-dependent transcription factor ATF-2 (487 aa).

The C2H2-type zinc finger occupies F7 to H31. 2 disordered regions span residues E106–E132 and Q267–K354. A compositionally biased stretch (low complexity) spans Q298–P319. The span at A328–R345 shows a compositional bias: basic and acidic residues. One can recognise a bZIP domain in the interval D334–H397. A basic motif region spans residues K336 to K356. The interval L362–L390 is leucine-zipper. Positions V387 to A396 match the Nuclear export signal motif. The interval K407–S487 is disordered. The segment covering V425–H436 has biased composition (polar residues). The span at S437 to S449 shows a compositional bias: low complexity. Residues S457 to E468 show a composition bias toward polar residues.

It belongs to the bZIP family. ATF subfamily. Binds DNA as a dimer and can form a homodimer in the absence of DNA. Can form a heterodimer with JUN. Heterodimerization is essential for its transcriptional activity.

The protein localises to the nucleus. It localises to the cytoplasm. Its subcellular location is the mitochondrion outer membrane. Functionally, transcriptional activator which regulates the transcription of various genes, including those involved in anti-apoptosis, cell growth, and DNA damage response. Dependent on its binding partner, binds to CRE (cAMP response element) consensus sequences (5'-TGACGTCA-3') or to AP-1 (activator protein 1) consensus sequences (5'-TGACTCA-3'). This Gallus gallus (Chicken) protein is Cyclic AMP-dependent transcription factor ATF-2 (ATF2).